The following is a 2316-amino-acid chain: Receptor-type tyrosine-protein phosphatase zeta (2316 aa).

Residues 1 to 24 (MRILQSFLACVQLLCVCRLDWAYG) form the signal peptide. Topologically, residues 25–1637 (YYRQQRKLVE…LAEGLESEKK (1613 aa)) are extracellular. Residues 36-300 (IGWSYTGALN…KFSRQVFSSY (265 aa)) form the Alpha-carbonic anhydrase domain. 2 disulfides stabilise this stretch: C56/C240 and C133/C264. N-linked (GlcNAc...) asparagine glycans are attached at residues N105, N134, N223, N232, N324, N381, and N497. Positions 314–413 (EPENVQADPE…LIVDMPTEDA (100 aa)) constitute a Fibronectin type-III domain. Disordered regions lie at residues 433–499 (YGKG…LNTS) and 518–537 (LPSQ…TSAS). N552 carries N-linked (GlcNAc...) asparagine glycosylation. Residues S572 and S576 each carry the phosphoserine modification. Disordered stretches follow at residues 586-624 (KLDS…TPEA) and 636-720 (RNAL…EMPH). Residues 592–602 (DDSSGSSPASS) are compositionally biased toward low complexity. O-linked (Xyl...) (chondroitin sulfate) serine glycosylation occurs at S595. Positions 603–621 (TVPFSTDNLSHGYTSSSDT) are enriched in polar residues. The N-linked (GlcNAc...) asparagine glycan is linked to N610. Phosphoserine; alternate is present on S645. S645 is a glycosylation site (O-linked (Xyl...) (chondroitin sulfate) serine; alternate). S647 is modified (phosphoserine). A compositionally biased stretch (polar residues) spans 666 to 675 (TDLTTQSETG). Residue N685 is glycosylated (N-linked (GlcNAc...) asparagine). The span at 699–711 (ETFSPDATASRGP) shows a compositional bias: polar residues. N786 carries N-linked (GlcNAc...) asparagine glycosylation. Residue S1005 is glycosylated (O-linked (Xyl...) (chondroitin sulfate) serine). 2 N-linked (GlcNAc...) asparagine glycosylation sites follow: N1025 and N1058. Disordered stretches follow at residues 1141–1172 (QASG…SHPS), 1204–1228 (KTAL…SSSS), 1401–1521 (LLPS…DGRE), and 1545–1622 (TSDE…NSSH). The segment covering 1152 to 1172 (LSTNSEPALSDTASSEVSHPS) has biased composition (polar residues). Polar residues predominate over residues 1401–1413 (LLPSKATSKPTHS). Over residues 1425 to 1439 (EDGDDYDDDDYDDID) the composition is skewed to acidic residues. An N-linked (GlcNAc...) asparagine glycan is attached at N1463. Over residues 1464–1478 (DSDTQESSLVDQSDP) the composition is skewed to polar residues. O-linked (Xyl...) (chondroitin sulfate) serine glycosylation is found at S1550 and S1552. Composition is skewed to polar residues over residues 1555–1569 (GTSD…STDF) and 1595–1609 (PRSS…HSGV). N1563 carries N-linked (GlcNAc...) asparagine glycosylation. Over residues 1610 to 1621 (SNSSEAEASNSS) the composition is skewed to low complexity. N-linked (GlcNAc...) asparagine glycosylation is found at N1611 and N1619. The helical transmembrane segment at 1638–1663 (AVIPLVIVSALTFICLVVLVGILIYW) threads the bilayer. Residues 1664 to 2316 (RKCFQTAHFY…NIAESLESLV (653 aa)) lie on the Cytoplasmic side of the membrane. T1685 and T1688 each carry phosphothreonine. 2 consecutive Tyrosine-protein phosphatase domains span residues 1718 to 1993 (FTEE…LVEA) and 2024 to 2283 (LEKQ…VLSL). Substrate-binding positions include D1902, 1934–1940 (CSAGVGR), and Q1978. The active-site Phosphocysteine intermediate is the C1934. S2056 bears the Phosphoserine mark.

The protein belongs to the protein-tyrosine phosphatase family. Receptor class 5 subfamily. Interacts with tenascin. Interacts with N-CAM and NG-CAM. The carbonic-anhydrase like domain interacts with CNTN1 (contactin). Interacts with PTN. Interaction with PTN promotes formation of homooligomers; oligomerization impairs phosphatase activity. Interacts (via chondroitin sulfate chains) with MDK (via C-terminal); this interaction is inhibited by PTN; this interaction promotes neuronal migration. In terms of tissue distribution, nervous tissue specific.

The protein resides in the cell membrane. It localises to the secreted. It carries out the reaction O-phospho-L-tyrosyl-[protein] + H2O = L-tyrosyl-[protein] + phosphate. Functionally, protein tyrosine phosphatase that negatively regulates oligodendrocyte precursor proliferation in the embryonic spinal cord. Required for normal differentiation of the precursor cells into mature, fully myelinating oligodendrocytes. May play a role in protecting oligondendrocytes against apoptosis. May play a role in the establishment of contextual memory, probably via the dephosphorylation of proteins that are part of important signaling cascades. Its function is as follows. Isoform 3 (phosphacan), previously designated 3F8 chondroitin sulfate proteoglycan or 3H1 keratan sulfate proteoglycan depending on the glycosylation status, is a soluble nervous tissue-specific proteoglycan. It is synthesized by glia and binds to neurons and to the neural cell adhesion molecules tenascin, N-CAM or NG-CAM but not to laminin and fibronectin. Phosphacan acts as a potent inhibitor of cell adhesion and neurite outgrowth. This chain is Receptor-type tyrosine-protein phosphatase zeta (Ptprz1), found in Rattus norvegicus (Rat).